Reading from the N-terminus, the 52-residue chain is UPF0391 membrane protein Tgr7_2500 (52 aa).

2 helical membrane passes run 4–24 and 29–49; these read WALIFLIVAIIAGTLGFSGVA and WIAQVLFLVFLALLVISLLGG.

The protein belongs to the UPF0391 family.

It is found in the cell membrane. This is UPF0391 membrane protein Tgr7_2500 from Thioalkalivibrio sulfidiphilus (strain HL-EbGR7).